A 359-amino-acid chain; its full sequence is Carbamoyl phosphate synthase small chain (359 aa).

The segment at 1–169 (MTKRILVLED…TKTSYPAPGV (169 aa)) is CPSase. 3 residues coordinate L-glutamine: serine 46, glycine 220, and glycine 222. The Glutamine amidotransferase type-1 domain maps to 172-358 (SVVLVDFGLK…IEMMEVFKQS (187 aa)). Residue cysteine 247 is the Nucleophile of the active site. 5 residues coordinate L-glutamine: methionine 248, glutamine 251, asparagine 289, glycine 291, and tyrosine 292. Catalysis depends on residues histidine 331 and aspartate 333.

It belongs to the CarA family. As to quaternary structure, composed of two chains; the small (or glutamine) chain promotes the hydrolysis of glutamine to ammonia, which is used by the large (or ammonia) chain to synthesize carbamoyl phosphate. Tetramer of heterodimers (alpha,beta)4.

The catalysed reaction is hydrogencarbonate + L-glutamine + 2 ATP + H2O = carbamoyl phosphate + L-glutamate + 2 ADP + phosphate + 2 H(+). The enzyme catalyses L-glutamine + H2O = L-glutamate + NH4(+). The protein operates within amino-acid biosynthesis; L-arginine biosynthesis; carbamoyl phosphate from bicarbonate: step 1/1. Its pathway is pyrimidine metabolism; UMP biosynthesis via de novo pathway; (S)-dihydroorotate from bicarbonate: step 1/3. Functionally, small subunit of the glutamine-dependent carbamoyl phosphate synthetase (CPSase). CPSase catalyzes the formation of carbamoyl phosphate from the ammonia moiety of glutamine, carbonate, and phosphate donated by ATP, constituting the first step of 2 biosynthetic pathways, one leading to arginine and/or urea and the other to pyrimidine nucleotides. The small subunit (glutamine amidotransferase) binds and cleaves glutamine to supply the large subunit with the substrate ammonia. The protein is Carbamoyl phosphate synthase small chain of Streptococcus pneumoniae (strain ATCC BAA-255 / R6).